A 411-amino-acid polypeptide reads, in one-letter code: Heparan-sulfate 6-O-sulfotransferase 1 (411 aa).

Residues 11-17 lie on the Cytoplasmic side of the membrane; sequence MVERASK. The helical; Signal-anchor for type II membrane protein transmembrane segment at 18 to 37 threads the bilayer; the sequence is FVLVVAGSVCFMLILYQYAG. Residues 38 to 411 are Lumenal-facing; sequence PGLSLGAPGG…DYMSHIIEKW (374 aa). A 3'-phosphoadenylyl sulfate-binding site is contributed by 93–101; the sequence is HIQKTGGTT. Substrate is bound by residues 123–124, Arg140, Trp145, and His150; that span reads KK. His150 (proton acceptor) is an active-site residue. 3'-phosphoadenylyl sulfate contacts are provided by Arg185 and Ser193. 2 residues coordinate substrate: His197 and Trp204. Asn264 is a glycosylation site (N-linked (GlcNAc...) asparagine). 317–319 is a 3'-phosphoadenylyl sulfate binding site; the sequence is MQY. Asn320 carries N-linked (GlcNAc...) asparagine glycosylation. Position 323-324 (323-324) interacts with 3'-phosphoadenylyl sulfate; the sequence is RA. A coiled-coil region spans residues 352 to 387; that stretch reads KDLFQQRYQYKRQLERREQRLRSREERLLHRAKEAL.

It belongs to the sulfotransferase 6 family. In terms of processing, N-glycosylated. Expressed in fetal brain.

It is found in the membrane. The catalysed reaction is alpha-D-glucosaminyl-[heparan sulfate](n) + 3'-phosphoadenylyl sulfate = 6-sulfo-alpha-D-glucosaminyl-[heparan sulfate](n) + adenosine 3',5'-bisphosphate + H(+). Its function is as follows. 6-O-sulfation enzyme which catalyzes the transfer of sulfate from 3'-phosphoadenosine 5'-phosphosulfate (PAPS) to position 6 of the N-sulfoglucosamine residue (GlcNS) of heparan sulfate. Critical for normal neuronal development where it may play a role in neuron branching. May also play a role in limb development. May prefer iduronic acid. In Homo sapiens (Human), this protein is Heparan-sulfate 6-O-sulfotransferase 1.